Reading from the N-terminus, the 1343-residue chain is Vascular endothelial growth factor receptor 2 (1343 aa).

Positions 1 to 19 (MESRALLAVALWFCVETRA) are cleaved as a signal peptide. Residues 20–760 (ASVGLPGDSL…EGVQEKTNLE (741 aa)) are Extracellular-facing. N-linked (GlcNAc...) asparagine glycans are attached at residues Asn46, Asn96, Asn143, Asn158, and Asn245. 7 Ig-like C2-type domains span residues 46–109 (NTTL…RDTD), 141–207 (NKNK…INDE), 224–320 (YDVV…KNKT), 328–414 (PFIA…HMVS), 421–540 (PQIG…RVIS), 547–654 (PEIT…LVKQ), and 663–749 (PMIT…TLFI). Cys53 and Cys103 form a disulfide bridge. Cys150 and Cys200 are joined by a disulfide. Cys246 and Cys307 form a disulfide bridge. 11 N-linked (GlcNAc...) asparagine glycosylation sites follow: Asn318, Asn374, Asn395, Asn507, Asn576, Asn609, Asn615, Asn627, Asn671, Asn700, and Asn717. Disulfide bonds link Cys445–Cys526 and Cys567–Cys638. Cys684 and Cys733 are joined by a disulfide. Residues 761-781 (VIILVGTAVIAMFFWLLLVIL) form a helical membrane-spanning segment. The Cytoplasmic segment spans residues 782–1343 (VRTVKRANEG…SGTTLRSSPV (562 aa)). Position 797 is a phosphotyrosine (Tyr797). Residues 830 to 1158 (LKLGKPLGRG…FSELVEHLGN (329 aa)) form the Protein kinase domain. ATP-binding positions include 836-844 (LGRGAFGQV) and Lys864. A Phosphotyrosine; by autocatalysis modification is found at Tyr947. Ser978 and Ser980 each carry phosphoserine. A Phosphotyrosine; by autocatalysis modification is found at Tyr992. A disulfide bond links Cys1020 and Cys1041. Residue Asp1024 is the Proton acceptor of the active site. Tyr1050, Tyr1055, Tyr1171, and Tyr1210 each carry phosphotyrosine; by autocatalysis. Phosphoserine occurs at positions 1227 and 1231. Thr1234 is subject to Phosphothreonine. Residues 1267 to 1314 (TLEDRNKLSPSFGGMMPSKSRESVASEGSNQTSGYQSGYHSDDTDTTV) are disordered. Positions 1292 to 1305 (SEGSNQTSGYQSGY) are enriched in polar residues. Residues Tyr1301, Tyr1305, and Tyr1315 each carry the phosphotyrosine; by autocatalysis modification.

This sequence belongs to the protein kinase superfamily. Tyr protein kinase family. CSF-1/PDGF receptor subfamily. Homodimer in the presence of bound dimeric VEGFA, VEGFC or VEGFD ligands; monomeric in the absence of bound ligands. Can also form heterodimers with FLT1/VEGFR1 and KDR/VEGFR2. Interacts (tyrosine phosphorylated) with LFYN, NCK1, PLCG1. Interacts (tyrosine-phosphorylated active form preferentially) with DAB2IP (via C2 domain and active form preferentially); the interaction occurs at the late phase of VEGFA response and inhibits KDR/VEGFR2 activity. Interacts with SHBSH2D2A/TSAD, GRB2, MYOF, CBL and PDCD6. Interacts (via C-terminus domain) with ERN1 (via kinase domain); the interaction is facilitated in a XBP1- and vascular endothelial growth factor (VEGF)-dependent manner in endothelial cells. Interacts (via juxtamembrane region) with chaperone PDCL3 (via thioredoxin fold region); the interaction leads to increased KDR/VEGFR2 abundance through inhibition of its ubiquitination and degradation. Interacts (tyrosine phosphorylated) with CCDC88A/GIV (via SH2-like region); binding requires autophosphorylation of the KDR/VEGFR2 C-terminal region. Interacts with isoform 2 of BSG. Interacts with SLC31A1; this interaction is induced upon VEGFA stimulation leading to SLC31A1 and KDR subsequent co-internalization to early endosomes, thereby activating KDR downstream signaling in endothelial cells. N-glycosylated. In terms of processing, ubiquitinated. Tyrosine phosphorylation of the receptor promotes its poly-ubiquitination, leading to its degradation via the proteasome or lysosomal proteases. Post-translationally, autophosphorylated on tyrosine residues upon ligand binding. Autophosphorylation occurs in trans, i.e. one subunit of the dimeric receptor phosphorylates tyrosine residues on the other subunit. Phosphorylation at Tyr-947 is important for interaction with SH2D2A/TSAD and VEGFA-mediated reorganization of the actin cytoskeleton. Phosphorylation at Tyr-1171 is important for interaction with PLCG1 and SHB. Phosphorylation at Tyr-1210 is important for interaction with NCK1 and FYN. Dephosphorylated by PTPRB. Dephosphorylated by PTPRJ at Tyr-797, Tyr-947, Tyr-992, Tyr-1050, Tyr-1055, Tyr-1171 and Tyr-1210. The inhibitory disulfide bond between Cys-1020 and Cys-1041 may serve as a specific molecular switch for H(2)S-induced modification that regulates KDR/VEGFR2 function. In terms of tissue distribution, expressed in the post-pubertal mammary glands.

The protein resides in the cell membrane. It is found in the cytoplasm. Its subcellular location is the nucleus. The protein localises to the cytoplasmic vesicle. It localises to the early endosome. The protein resides in the cell junction. It is found in the endoplasmic reticulum. The catalysed reaction is L-tyrosyl-[protein] + ATP = O-phospho-L-tyrosyl-[protein] + ADP + H(+). Its activity is regulated as follows. Present in an inactive conformation in the absence of bound ligand. Binding of VEGFA, VEGFC or VEGFD leads to dimerization and activation by autophosphorylation on tyrosine residues. May be regulated by hydrogen sulfide (H(2)S) levels via a sensitive intracellular disulfide bond. Tyrosine-protein kinase that acts as a cell-surface receptor for VEGFA, VEGFC and VEGFD. Plays an essential role in the regulation of angiogenesis, vascular development, vascular permeability, and embryonic hematopoiesis. Promotes proliferation, survival, migration and differentiation of endothelial cells. Promotes reorganization of the actin cytoskeleton. Isoforms lacking a transmembrane domain may function as decoy receptors for VEGFA, VEGFC and/or VEGFD. Modulates FLT1 and FLT4 signaling by forming heterodimers. Binding of vascular growth factors to isoform 1 leads to the activation of several signaling cascades. Activation of PLCG1 leads to the production of the cellular signaling molecules diacylglycerol and inositol-1,4,5-trisphosphate and the activation of protein kinase C. Mediates activation of MAPK1/ERK2, MAPK3/ERK1 and the MAP kinase signaling pathway, as well as of the AKT1 signaling pathway. Mediates phosphorylation of PIK3R1, the regulatory subunit of phosphatidylinositol 3-kinase, reorganization of the actin cytoskeleton and activation of PTK2/FAK1. Required for VEGFA-mediated induction of NOS2 and NOS3, leading to the production of the signaling molecule nitric oxide (NO) by endothelial cells. Phosphorylates PLCG1. Promotes phosphorylation of FYN, NCK1, NOS3, PIK3R1, PTK2/FAK1 and SRC. This Rattus norvegicus (Rat) protein is Vascular endothelial growth factor receptor 2.